We begin with the raw amino-acid sequence, 147 residues long: Urease accessory protein UreE (147 aa).

The protein belongs to the UreE family.

The protein resides in the cytoplasm. Functionally, involved in urease metallocenter assembly. Binds nickel. Probably functions as a nickel donor during metallocenter assembly. This Marinomonas sp. (strain MWYL1) protein is Urease accessory protein UreE.